We begin with the raw amino-acid sequence, 180 residues long: Large ribosomal subunit protein uL6 (180 aa).

Belongs to the universal ribosomal protein uL6 family. In terms of assembly, part of the 50S ribosomal subunit.

Functionally, this protein binds to the 23S rRNA, and is important in its secondary structure. It is located near the subunit interface in the base of the L7/L12 stalk, and near the tRNA binding site of the peptidyltransferase center. The sequence is that of Large ribosomal subunit protein uL6 from Clostridium botulinum (strain Loch Maree / Type A3).